A 153-amino-acid polypeptide reads, in one-letter code: Small ribosomal subunit protein bS6 (153 aa).

The disordered stretch occupies residues 97-153; that stretch reads EEGPSAMMRKADRDRERDDRGGGFRGERDGGGFRGDRGDRGDRGPRRPRDEETADEE. Basic and acidic residues predominate over residues 105–147; sequence RKADRDRERDDRGGGFRGERDGGGFRGDRGDRGDRGPRRPRDE.

It belongs to the bacterial ribosomal protein bS6 family.

Its function is as follows. Binds together with bS18 to 16S ribosomal RNA. The protein is Small ribosomal subunit protein bS6 of Bradyrhizobium sp. (strain BTAi1 / ATCC BAA-1182).